The chain runs to 956 residues: Outer capsid protein VP2 (956 aa).

It belongs to the orbivirus VP2 family.

Its subcellular location is the virion. The VP2 protein is one of the two proteins (with VP5) which constitute the virus particle outer capsid. It is the major target of the host immunogenic response. Responsible for viral attachment to target host cell, probably by binding to sialic acid. This attachment induces virion internalization predominantly through clathrin-dependent endocytosis. This Bluetongue virus 10 (isolate USA) (BTV 10) protein is Outer capsid protein VP2 (Segment-2).